We begin with the raw amino-acid sequence, 480 residues long: Aspartyl/glutamyl-tRNA(Asn/Gln) amidotransferase subunit B (480 aa).

The protein belongs to the GatB/GatE family. GatB subfamily. In terms of assembly, heterotrimer of A, B and C subunits.

The enzyme catalyses L-glutamyl-tRNA(Gln) + L-glutamine + ATP + H2O = L-glutaminyl-tRNA(Gln) + L-glutamate + ADP + phosphate + H(+). It carries out the reaction L-aspartyl-tRNA(Asn) + L-glutamine + ATP + H2O = L-asparaginyl-tRNA(Asn) + L-glutamate + ADP + phosphate + 2 H(+). Allows the formation of correctly charged Asn-tRNA(Asn) or Gln-tRNA(Gln) through the transamidation of misacylated Asp-tRNA(Asn) or Glu-tRNA(Gln) in organisms which lack either or both of asparaginyl-tRNA or glutaminyl-tRNA synthetases. The reaction takes place in the presence of glutamine and ATP through an activated phospho-Asp-tRNA(Asn) or phospho-Glu-tRNA(Gln). The sequence is that of Aspartyl/glutamyl-tRNA(Asn/Gln) amidotransferase subunit B from Streptococcus pneumoniae (strain ATCC 700669 / Spain 23F-1).